Here is a 324-residue protein sequence, read N- to C-terminus: Corticotropin-releasing factor-binding protein (324 aa).

The first 23 residues, 1–23, serve as a signal peptide directing secretion; it reads MAPTLKLQCHFILVCLLALRGES. 5 cysteine pairs are disulfide-bonded: C62-C83, C106-C143, C185-C207, C239-C266, and C279-C320. N-linked (GlcNAc...) asparagine glycosylation is present at N206.

Belongs to the CRF-binding protein family.

The protein localises to the secreted. Binds CRF and inactivates it. May prevent inappropriate pituitary-adrenal stimulation in pregnancy. This is Corticotropin-releasing factor-binding protein (CRHBP) from Ovis aries (Sheep).